An 88-amino-acid chain; its full sequence is Transcription factor ILI5 (88 aa).

Residues 1 to 54 (MSSRRSSRGSISEEEINELISKLQSLLPNSRRRGSSQASTTKLLKETCNYIKSL) enclose the bHLH domain.

The protein belongs to the bHLH protein family. Interacts with APG.

Its subcellular location is the nucleus. Its function is as follows. Atypical and probable non DNA-binding bHLH transcription factor that acts as a positive regulator of grain size. Binds the transcription repressor APG and forms a heterodimer of antagonistic basic helix-loop-helix transcription factors that regulates grain length and weight by controlling cell elongation in lemma and palea. In Oryza sativa subsp. indica (Rice), this protein is Transcription factor ILI5 (ILI5).